The following is a 1051-amino-acid chain: Lateral signaling target protein 2 homolog (1051 aa).

Disordered stretches follow at residues 305-440, 516-552, 566-703, and 837-968; these read PLGS…DEDL, GSNA…PSTS, HLPS…NASS, and IDLA…DGKA. A compositionally biased stretch (low complexity) spans 319–358; it reads NNTSSSTSNNNNNNNNNSSSSSSSSSGSGSNTAKTSTSST. Basic and acidic residues predominate over residues 360–370; it reads KAVERLVDHRN. Positions 371–391 are enriched in polar residues; that stretch reads NNSSTVAGATQPSTARSPSML. Composition is skewed to low complexity over residues 392 to 401 and 409 to 428; these read SLSAGSTPTA and PSHS…NPPA. A compositionally biased stretch (polar residues) spans 518 to 528; the sequence is NAATERQQQQQ. Low complexity-rich tracts occupy residues 533–549 and 568–582; these read LQPG…QDEP and PSSS…SSNQ. A phosphoserine mark is found at S569 and S570. A compositionally biased stretch (polar residues) spans 583–596; sequence QTTIKTPNGNQSMP. A compositionally biased stretch (low complexity) spans 597-606; that stretch reads NSSSSSSNHN. Composition is skewed to basic residues over residues 607 to 637 and 650 to 672; these read NNRH…HPHH and HHHH…ARKR. Over residues 692–703 the composition is skewed to polar residues; sequence TPGSADTSNASS. Residues 840–852 show a composition bias toward low complexity; sequence ASGNNNGNSNAAA. At S861 the chain carries Phosphoserine. 2 stretches are compositionally biased toward low complexity: residues 879–924 and 937–960; these read QQQQ…SPIS and SSIG…MSPP. The segment at 965–1025 adopts an FYVE-type zinc-finger fold; that stretch reads DGKAPRCMSC…VCRECYVREV (61 aa). C971, C974, C987, C990, C995, C998, C1017, and C1020 together coordinate Zn(2+). The disordered stretch occupies residues 1028–1051; the sequence is SRQAPAQPSQAHGQASRPQAASAS.

It belongs to the lst-2 family.

Negative regulator of epidermal growth factor receptor (EGFR) signaling. The protein is Lateral signaling target protein 2 homolog of Drosophila mojavensis (Fruit fly).